The sequence spans 297 residues: Large ribosomal subunit protein uL18 (297 aa).

G2 is subject to N-acetylglycine. N6-acetyllysine is present on residues K5 and K48. Residue S185 is modified to Phosphoserine. Residue K220 is modified to N6-acetyllysine; alternate. K220 participates in a covalent cross-link: Glycyl lysine isopeptide (Lys-Gly) (interchain with G-Cter in SUMO1); alternate. K220 is covalently cross-linked (Glycyl lysine isopeptide (Lys-Gly) (interchain with G-Cter in SUMO2); alternate). T232 is modified (phosphothreonine). The interval 253 to 297 is disordered; that stretch reads YEKKPKREVKKKRWNRPKMSLAQKKDRVAQKKASFLRAQERAAES. The segment covering 258 to 268 has biased composition (basic residues); it reads KREVKKKRWNR. Phosphoserine is present on S272.

Belongs to the universal ribosomal protein uL18 family. As to quaternary structure, component of the large ribosomal subunit (LSU). Part of the 5S RNP complex, which is a LSU subcomplex composed of the 5S RNA, RPL5 and RPL11. Component of a hexameric 5S RNP precursor complex, composed of 5S RNA, RRS1, RPF2/BXDC1, RPL5, RPL11 and HEATR3; this complex acts as a precursor for ribosome assembly. Interacts with NVL in an ATP-dependent manner. Interacts with RRP1B. Interacts with IPO5, IPO7 and KPNB1; these interactions may be involved in RPL5 nuclear import for the assembly of ribosomal subunits.

The protein resides in the cytoplasm. It is found in the nucleus. Its subcellular location is the nucleolus. Its function is as follows. Component of the ribosome, a large ribonucleoprotein complex responsible for the synthesis of proteins in the cell. The small ribosomal subunit (SSU) binds messenger RNAs (mRNAs) and translates the encoded message by selecting cognate aminoacyl-transfer RNA (tRNA) molecules. The large subunit (LSU) contains the ribosomal catalytic site termed the peptidyl transferase center (PTC), which catalyzes the formation of peptide bonds, thereby polymerizing the amino acids delivered by tRNAs into a polypeptide chain. The nascent polypeptides leave the ribosome through a tunnel in the LSU and interact with protein factors that function in enzymatic processing, targeting, and the membrane insertion of nascent chains at the exit of the ribosomal tunnel. As part of the 5S RNP/5S ribonucleoprotein particle it is an essential component of the LSU, required for its formation and the maturation of rRNAs. It also couples ribosome biogenesis to p53/TP53 activation. As part of the 5S RNP it accumulates in the nucleoplasm and inhibits MDM2, when ribosome biogenesis is perturbed, mediating the stabilization and the activation of TP53. The protein is Large ribosomal subunit protein uL18 (Rpl5) of Mus musculus (Mouse).